The chain runs to 125 residues: Neuraminyllactose-binding hemagglutinin (125 aa).

Residues 92-97 (KRTTQK) form an N-acetyl-neuraminyl-alpha(2,3)-lactose binding motif region.

It is found in the cell outer membrane. This Helicobacter acinonychis (Helicobacter acinonyx) protein is Neuraminyllactose-binding hemagglutinin (hpaA).